A 711-amino-acid chain; its full sequence is Polyribonucleotide nucleotidyltransferase (711 aa).

Residues D490 and D496 each contribute to the Mg(2+) site. The 60-residue stretch at 557–616 folds into the KH domain; sequence PRIETMQIPTDKIREVIGSGGKVIREIVETSGAKVDINDDGIIKIASANGEAIKKAYEMI. The S1 motif domain maps to 626 to 694; the sequence is GKVYTGTVVK…DRGKVRLSMK (69 aa).

Belongs to the polyribonucleotide nucleotidyltransferase family. Mg(2+) serves as cofactor.

It is found in the cytoplasm. The catalysed reaction is RNA(n+1) + phosphate = RNA(n) + a ribonucleoside 5'-diphosphate. Involved in mRNA degradation. Catalyzes the phosphorolysis of single-stranded polyribonucleotides processively in the 3'- to 5'-direction. The sequence is that of Polyribonucleotide nucleotidyltransferase from Dinoroseobacter shibae (strain DSM 16493 / NCIMB 14021 / DFL 12).